We begin with the raw amino-acid sequence, 179 residues long: O-acetyl-ADP-ribose deacetylase (179 aa).

The Macro domain occupies 1 to 175 (MTSRLQVIQG…LYARLLTQQG (175 aa)). Substrate-binding positions include 11–12 (DI), asparagine 25, 33–35 (GVD), and 122–126 (STGVY). The active-site Proton acceptor is the aspartate 35.

The protein belongs to the MacroD-type family. YmdB subfamily. In terms of assembly, homodimer. Interacts with RNase III.

It catalyses the reaction 3''-O-acetyl-ADP-D-ribose + H2O = ADP-D-ribose + acetate + H(+). The catalysed reaction is 2''-O-acetyl-ADP-D-ribose + H2O = ADP-D-ribose + acetate + H(+). Functionally, deacetylates O-acetyl-ADP ribose to yield ADP-ribose and free acetate. Down-regulates ribonuclease 3 (RNase III) activity. Acts by interacting directly with the region of the ribonuclease that is required for dimerization/activation. This chain is O-acetyl-ADP-ribose deacetylase, found in Salmonella newport (strain SL254).